Consider the following 95-residue polypeptide: MPTFIVLSTLTDDGAETLVKNPERIKEVNQELERDFGVRVVAQYAVLGPYDFVNVVEAEDAATVARAMLHLASRGSVKTMTLEAIPVADLIARLK.

Interacts with glutamine synthetase (TTHA1329) and cystathionine beta-lyase (TTHA1620), but proteins do not form a ternary complex.

Functionally, binds to glutamine synthetase and cystathionine beta-lyase. May be utilized for the efficient use of nitrogen in the global nitrogen regulation of T.thermophilus. This is Glutamine synthetase and cystathionine beta-lyase binding protein from Thermus thermophilus (strain ATCC 27634 / DSM 579 / HB8).